Reading from the N-terminus, the 418-residue chain is Serine--tRNA ligase (418 aa).

227–229 (TSE) provides a ligand contact to L-serine. ATP is bound by residues 258-260 (RRE) and Val274. Glu281 contributes to the L-serine binding site. 345–348 (ELTS) serves as a coordination point for ATP. Residue Thr380 participates in L-serine binding.

This sequence belongs to the class-II aminoacyl-tRNA synthetase family. Type-1 seryl-tRNA synthetase subfamily. In terms of assembly, homodimer. The tRNA molecule binds across the dimer.

It is found in the cytoplasm. It catalyses the reaction tRNA(Ser) + L-serine + ATP = L-seryl-tRNA(Ser) + AMP + diphosphate + H(+). The catalysed reaction is tRNA(Sec) + L-serine + ATP = L-seryl-tRNA(Sec) + AMP + diphosphate + H(+). Its pathway is aminoacyl-tRNA biosynthesis; selenocysteinyl-tRNA(Sec) biosynthesis; L-seryl-tRNA(Sec) from L-serine and tRNA(Sec): step 1/1. Catalyzes the attachment of serine to tRNA(Ser). Is also able to aminoacylate tRNA(Sec) with serine, to form the misacylated tRNA L-seryl-tRNA(Sec), which will be further converted into selenocysteinyl-tRNA(Sec). The protein is Serine--tRNA ligase of Rhodococcus jostii (strain RHA1).